The primary structure comprises 217 residues: Adenylate kinase (217 aa).

An ATP-binding site is contributed by 10–15; the sequence is GAGKGT. Residues 30-59 are NMP; that stretch reads STGDILRAAVSEMTPMGVKAKGYMESGALV. AMP is bound by residues Thr31, Arg36, 57-59, 85-88, and Gln92; these read ALV and GFPR. The tract at residues 126 to 163 is LID; sequence GRRTCRLCGKGYHVVFDPPRVSGRCDECLGELFQRDDD. An ATP-binding site is contributed by Arg127. Zn(2+) is bound by residues Cys130, Cys133, Cys150, and Cys153. Residues Arg160 and Arg171 each coordinate AMP. Gly199 provides a ligand contact to ATP.

This sequence belongs to the adenylate kinase family. In terms of assembly, monomer.

Its subcellular location is the cytoplasm. It catalyses the reaction AMP + ATP = 2 ADP. Its pathway is purine metabolism; AMP biosynthesis via salvage pathway; AMP from ADP: step 1/1. Its function is as follows. Catalyzes the reversible transfer of the terminal phosphate group between ATP and AMP. Plays an important role in cellular energy homeostasis and in adenine nucleotide metabolism. The chain is Adenylate kinase from Geotalea uraniireducens (strain Rf4) (Geobacter uraniireducens).